Here is a 522-residue protein sequence, read N- to C-terminus: Maturase K (522 aa).

It belongs to the intron maturase 2 family. MatK subfamily.

The protein resides in the plastid. It localises to the chloroplast. Usually encoded in the trnK tRNA gene intron. Probably assists in splicing its own and other chloroplast group II introns. This is Maturase K from Tigridia pavonia (Mexican shell flower).